Reading from the N-terminus, the 181-residue chain is Protein AC41 (181 aa).

In terms of biological role, plays a role in late gene expression. In Autographa californica nuclear polyhedrosis virus (AcMNPV), this protein is Protein AC41 (AC41).